Reading from the N-terminus, the 314-residue chain is Methionyl-tRNA formyltransferase (314 aa).

113 to 116 is a (6S)-5,6,7,8-tetrahydrofolate binding site; the sequence is SLLP.

This sequence belongs to the Fmt family.

The enzyme catalyses L-methionyl-tRNA(fMet) + (6R)-10-formyltetrahydrofolate = N-formyl-L-methionyl-tRNA(fMet) + (6S)-5,6,7,8-tetrahydrofolate + H(+). Attaches a formyl group to the free amino group of methionyl-tRNA(fMet). The formyl group appears to play a dual role in the initiator identity of N-formylmethionyl-tRNA by promoting its recognition by IF2 and preventing the misappropriation of this tRNA by the elongation apparatus. The chain is Methionyl-tRNA formyltransferase from Serratia proteamaculans (strain 568).